Consider the following 729-residue polypeptide: Fatty acid oxidation complex subunit alpha (729 aa).

Residues 1-189 are enoyl-CoA hydratase/isomerase; sequence MLYKGDTLYL…KVGLVDAVVK (189 aa). Aspartate 296 contributes to the substrate binding site. The tract at residues 311-729 is 3-hydroxyacyl-CoA dehydrogenase; it reads ETPKQAAVLG…AQPVGELQTA (419 aa). NAD(+)-binding positions include methionine 324, aspartate 343, 400–402, lysine 407, and serine 429; that span reads VVE. Histidine 450 functions as the For 3-hydroxyacyl-CoA dehydrogenase activity in the catalytic mechanism. Position 453 (asparagine 453) interacts with NAD(+). Positions 500 and 660 each coordinate substrate. The tract at residues 708–729 is disordered; it reads SHNAPYYPQVEPAQPVGELQTA.

The protein in the N-terminal section; belongs to the enoyl-CoA hydratase/isomerase family. It in the C-terminal section; belongs to the 3-hydroxyacyl-CoA dehydrogenase family. In terms of assembly, heterotetramer of two alpha chains (FadB) and two beta chains (FadA).

The enzyme catalyses a (3S)-3-hydroxyacyl-CoA + NAD(+) = a 3-oxoacyl-CoA + NADH + H(+). It catalyses the reaction a (3S)-3-hydroxyacyl-CoA = a (2E)-enoyl-CoA + H2O. It carries out the reaction a 4-saturated-(3S)-3-hydroxyacyl-CoA = a (3E)-enoyl-CoA + H2O. The catalysed reaction is (3S)-3-hydroxybutanoyl-CoA = (3R)-3-hydroxybutanoyl-CoA. The enzyme catalyses a (3Z)-enoyl-CoA = a 4-saturated (2E)-enoyl-CoA. It catalyses the reaction a (3E)-enoyl-CoA = a 4-saturated (2E)-enoyl-CoA. Its pathway is lipid metabolism; fatty acid beta-oxidation. Its function is as follows. Involved in the aerobic and anaerobic degradation of long-chain fatty acids via beta-oxidation cycle. Catalyzes the formation of 3-oxoacyl-CoA from enoyl-CoA via L-3-hydroxyacyl-CoA. It can also use D-3-hydroxyacyl-CoA and cis-3-enoyl-CoA as substrate. The polypeptide is Fatty acid oxidation complex subunit alpha (Cronobacter sakazakii (strain ATCC BAA-894) (Enterobacter sakazakii)).